The following is a 350-amino-acid chain: Induced myeloid leukemia cell differentiation protein Mcl-1 (350 aa).

Residues Lys5 and Lys40 each participate in a glycyl lysine isopeptide (Lys-Gly) (interchain with G-Cter in ubiquitin) cross-link. The segment at Glu47–Pro87 is disordered. The segment covering Gly50 to Ala61 has biased composition (gly residues). The PEST-like stretch occupies residues Arg104–Tyr175. Ser121 is modified (phosphoserine). Residue Lys136 forms a Glycyl lysine isopeptide (Lys-Gly) (interchain with G-Cter in ubiquitin) linkage. The disordered stretch occupies residues Gly148–Glu171. A compositionally biased stretch (polar residues) spans Ser150–Pro161. Residue Ser159 is modified to Phosphoserine; by GSK3-alpha and GSK3-beta. Ser162 carries the phosphoserine modification. Residue Thr163 is modified to Phosphothreonine; by MAPK. Glycyl lysine isopeptide (Lys-Gly) (interchain with G-Cter in ubiquitin) cross-links involve residues Lys194 and Lys197. The BH3 signature appears at Ala209 to Asn223. The BH1 motif lies at His252 to Ala272. The short motif at Asp304–Phe319 is the BH2 element. The chain crosses the membrane as a helical span at residues Ile328–Leu348.

The protein belongs to the Bcl-2 family. As to quaternary structure, interacts with HIF3A (via C-terminus domain). Interacts with BAD, BOK, BIK and BMF. Interacts with PMAIP1. Interacts with BBC3. Isoform 1 interacts with BAX, BAK1 and TPT1. Heterodimer of isoform 1 and isoform 2. Homodimers of isoform 1 or isoform 2 are not detected. Isoform 2 does not interact with pro-apoptotic BCL2-related proteins. Interacts with RTL10/BOP. Interacts with BCL2L11; may sequester BCL2L11 to prevent its pro-apoptotic activity. Interacts with GIMAP5 and HSPA8/HSC70; the interaction between HSPA8 and MCL1 is impaired in the absence of GIMAP5. Cleaved by CASP3 during apoptosis. In intact cells cleavage occurs preferentially after Asp-127, yielding a pro-apoptotic 28 kDa C-terminal fragment. In terms of processing, rapidly degraded in the absence of phosphorylation on Thr-163 in the PEST region. Post-translationally, phosphorylated on Ser-159, by GSK3, in response to IL3/interleukin-3 withdrawal. Phosphorylation at Ser-159 induces ubiquitination and proteasomal degradation, abrogating the anti-apoptotic activity. Treatment with taxol or okadaic acid induces phosphorylation on additional sites. Ubiquitinated. Ubiquitination is induced by phosphorylation at Ser-159. Deubiquitinated by USP20; leading to increased stability.

It is found in the membrane. It localises to the cytoplasm. The protein localises to the mitochondrion. The protein resides in the nucleus. Its subcellular location is the nucleoplasm. Its function is as follows. Involved in the regulation of apoptosis versus cell survival, and in the maintenance of viability but not of proliferation. Mediates its effects by interactions with a number of other regulators of apoptosis. Isoform 1 inhibits apoptosis. Isoform 2 promotes apoptosis. In Homo sapiens (Human), this protein is Induced myeloid leukemia cell differentiation protein Mcl-1 (MCL1).